Consider the following 562-residue polypeptide: Putative transport protein PC1_1686 (562 aa).

Transmembrane regions (helical) follow at residues 8–28, 32–52, 66–86, 93–113, 116–136, and 158–178; these read LLNGNYILLLFVVLSLGLCLG, LGPVQLGNSIGVLVVSLLLGQ, FMLFIFCVGVEAGPNFFSIFF, FMLALVMVGSAMLLALGLGKF, WGIGLTAGMLAGSMTSTPVLV, and HLSLGYALTYLVGLVSLIFGA. 2 RCK C-terminal domains span residues 202 to 288 and 292 to 373; these read LDAD…NFRD and VFDR…RIGF. Transmembrane regions (helical) follow at residues 383-403, 406-426, 447-467, 478-498, and 537-557; these read LLAFCAFFVIGIMVGLITIQF, FTFGIGNAAGLLFAGIMLGFL, FGLMVFMAGVGLSAGSTINSS, SGLIVSLVPVVICFLFGAYVL, and GTYAIANVLLTLAGSLIVIIW.

It belongs to the AAE transporter (TC 2.A.81) family. YbjL subfamily.

It localises to the cell membrane. This is Putative transport protein PC1_1686 from Pectobacterium carotovorum subsp. carotovorum (strain PC1).